The following is a 511-amino-acid chain: Apolipoprotein N-acyltransferase (511 aa).

6 helical membrane passes run 7–29 (PGWP…LAPF), 58–78 (GWWY…VSIH), 90–110 (LLML…AWLW), 125–145 (LAFA…LTGF), 163–183 (VPVG…ALLV), and 192–212 (GASL…GLYL). In terms of domain architecture, CN hydrolase spans 230–470 (IQGNIAQELK…QGILRGEVIP (241 aa)). Glu-269 (proton acceptor) is an active-site residue. The active site involves Lys-330. Catalysis depends on Cys-382, which acts as the Nucleophile. A helical transmembrane segment spans residues 482–502 (VWPLAGLAGVLLLWALLGRQL).

The protein belongs to the CN hydrolase family. Apolipoprotein N-acyltransferase subfamily.

The protein resides in the cell inner membrane. The catalysed reaction is N-terminal S-1,2-diacyl-sn-glyceryl-L-cysteinyl-[lipoprotein] + a glycerophospholipid = N-acyl-S-1,2-diacyl-sn-glyceryl-L-cysteinyl-[lipoprotein] + a 2-acyl-sn-glycero-3-phospholipid + H(+). The protein operates within protein modification; lipoprotein biosynthesis (N-acyl transfer). Catalyzes the phospholipid dependent N-acylation of the N-terminal cysteine of apolipoprotein, the last step in lipoprotein maturation. This is Apolipoprotein N-acyltransferase from Pseudomonas aeruginosa (strain ATCC 15692 / DSM 22644 / CIP 104116 / JCM 14847 / LMG 12228 / 1C / PRS 101 / PAO1).